Here is a 187-residue protein sequence, read N- to C-terminus: MATTADFKNGLVLKIDNKLQQIIEFQHVKPGKGPAFVRTKLKDVVSGKVTDKTFNAGVKVETATVDRRDMTYLYNDGSSYVVMDEKTFEQAELAPHIFGDAARFLLENTTVQVSFHEGEPLFAELPISLDLRIEHTDPGLQGDRSTGGTKPATLETGAEIQVPLFIETGNVVKVDTRDGSYLSRVNN.

Belongs to the elongation factor P family.

Its subcellular location is the cytoplasm. The protein operates within protein biosynthesis; polypeptide chain elongation. Involved in peptide bond synthesis. Stimulates efficient translation and peptide-bond synthesis on native or reconstituted 70S ribosomes in vitro. Probably functions indirectly by altering the affinity of the ribosome for aminoacyl-tRNA, thus increasing their reactivity as acceptors for peptidyl transferase. The polypeptide is Elongation factor P (Corynebacterium diphtheriae (strain ATCC 700971 / NCTC 13129 / Biotype gravis)).